We begin with the raw amino-acid sequence, 377 residues long: tRNA-queuosine alpha-mannosyltransferase (377 aa).

The protein belongs to the glycosyltransferase group 1 family. Glycosyltransferase 4 subfamily.

It carries out the reaction queuosine(34) in tRNA(Asp) + GDP-alpha-D-mannose = O-4''-alpha-D-mannosylqueuosine(34) in tRNA(Asp) + GDP + H(+). Glycosyltransferase that specifically catalyzes mannosylation of cytoplasmic tRNA(Asp) modified with queuosine at position 34 (queuosine(34)). Mannosylates the cyclopentene moiety of queuosine(34) in tRNA(Asp) to form mannosyl-queuosine(34). The chain is tRNA-queuosine alpha-mannosyltransferase from Drosophila melanogaster (Fruit fly).